The following is a 501-amino-acid chain: Cytochrome P450 76M5 (501 aa).

The chain crosses the membrane as a helical span at residues 5–25 (ELWVLAAALAVSLLYYLAALM). C443 contributes to the heme binding site.

This sequence belongs to the cytochrome P450 family. Requires heme as cofactor.

The protein localises to the membrane. It carries out the reaction ent-sandaracopimaradien-3beta-ol + reduced [NADPH--hemoprotein reductase] + O2 = oryzalexin E + oxidized [NADPH--hemoprotein reductase] + H2O + H(+). In terms of biological role, enzyme of the diterpenoid metabolism involved in the biosynthesis of the oryzalexin class of phytoalexins. Hydroxylates ent-sandaracopimaradien. This is Cytochrome P450 76M5 from Oryza sativa subsp. japonica (Rice).